We begin with the raw amino-acid sequence, 600 residues long: Proton channel OTOP1 (600 aa).

Residues 1–50 form a disordered region; that stretch reads MPGGPGAPSSPAASSGSSRAAPSGIAACPLSPPPLARGSPQASGPRRGAS. Residues 1-56 lie on the Cytoplasmic side of the membrane; it reads MPGGPGAPSSPAASSGSSRAAPSGIAACPLSPPPLARGSPQASGPRRGASVPQKLA. The segment covering 7-27 has biased composition (low complexity); the sequence is APSSPAASSGSSRAAPSGIAA. Residues 57–78 form a helical membrane-spanning segment; it reads ETLSSQYGLNVFVAGLLFLLAW. Over 79 to 86 the chain is Extracellular; it reads AVHATGVG. Residues 87 to 110 traverse the membrane as a helical segment; sequence KSDLLCVLTALMLLQLLWMLWYVG. Residues 111 to 128 lie on the Cytoplasmic side of the membrane; it reads RSYMQRRLIRPKDTHAGA. A helical membrane pass occupies residues 129–151; sequence RWLRGSITLFAFITVVLGCLKVA. Over 152–161 the chain is Extracellular; it reads YFIGFSECLS. A helical membrane pass occupies residues 162–186; that stretch reads ATEGVFPVTHAVHTLLQVYFLWGHA. Topologically, residues 187-194 are cytoplasmic; the sequence is KDIIMSFK. Residues 195–217 form a helical membrane-spanning segment; the sequence is TLERFGVIHSVFTNLLLWANSVL. Topologically, residues 218–262 are extracellular; that stretch reads NESKHQLNEHKERLITLGFGNITIVLDDHTPQCNCTPPALCSALS. The chain crosses the membrane as a helical span at residues 263–288; that stretch reads HGIYYLYPFNIEYQILASTMLYVLWK. At 289–309 the chain is on the cytoplasmic side; that stretch reads NIGRRVDSSQHQKMQCRFDGV. Residues 310-332 form a helical membrane-spanning segment; it reads LVGSVLGLTVLAATIAVVVVYMI. The Extracellular portion of the chain corresponds to 333 to 342; the sequence is HIGRSKSKSE. Residues 343–368 form a helical membrane-spanning segment; the sequence is SALIMFYLYAITVLLLMGAAGLVGSW. Residues 369–386 are Cytoplasmic-facing; it reads IYRVDEKSLDESKNPARK. A helical transmembrane segment spans residues 387–411; that stretch reads LDVDLLVATGSGSWLLSWGSILAIA. The Extracellular segment spans residues 412 to 421; that stretch reads CAETRPPYTW. Residues 422–442 form a helical membrane-spanning segment; sequence YNLPYSVLVIVEKYVQNIFII. Residues 443-532 lie on the Cytoplasmic side of the membrane; that stretch reads ESVHLEPEGV…QGGMKRRLLR (90 aa). A helical membrane pass occupies residues 533–551; the sequence is NITAFLFLCNISLWIPPAF. At 552–569 the chain is on the extracellular side; that stretch reads GCRPEYDNGLEEIVFGFE. A helical transmembrane segment spans residues 570-593; the sequence is PWIIVVNLAMPFSIFYRMHAAAAL. At 594-600 the chain is on the cytoplasmic side; the sequence is FEVYCKI.

This sequence belongs to the otopetrin family. As to quaternary structure, homodimer. Interacts with STAT1, independently of STAT1 phosphorylation status. In terms of tissue distribution, expressed in thymus, heart, kidney, skin, vestibular system of the inner ear, sour taste cells, heart, uterus, dorsal root ganglion, adrenal gland, lactating mammary gland and stimulated mast cells. In the inner ear, expressed in the supporting cells in extrastriolar regions of the saccule and in the utricle, but not in the cochlea. Expressed in brown adipose tissue. Expressed in epididymal white adipose tissue (eWAT), as well as in inguinal fat, in obese animals, but hardly detectable in eWAT from lean mice. Expressed in acid-sensing taste receptor cells (PKD2L1-positive cells), but not in other types of taste cells (at protein level).

The protein localises to the cell membrane. The protein resides in the cell projection. It localises to the microvillus. It catalyses the reaction H(+)(in) = H(+)(out). With respect to regulation, activated by both acid and alkali, with proton influx in response to extracellular acid and proton efflux during alkali stimulation. Inhibited by Zn(2+); this inhibition is thought to be pH-sensitive. Currents evoked in response to mild acid (pH 6.0) stimulus may also be mildly potentiated by exposure to Zn(2+). Activated by NH(4)Cl. Proton-selective ion channel. Biphasically modulated by acid and alkali, mediating proton influx and efflux in response to extracellular acid and base stimulation, respectively. Sour taste receptor, which carries inward currents in response to extracellular acidification. Sensor for ammonium chloride (NH(4)Cl) in taste receptor cells. NH(4)Cl acts by increasing the intracellular pH, thereby generating a driving force for proton entry through OTOP1 channel. Might also participate in alkaline sensation. Plays a role in the regulation of Ca(2+) flux in response to purigenic (ATP, ADP and UDP) stimuli, leading to increase in cytosolic Ca(2+) due to influx of extracellular calcium. May play this role by inhibiting P2Y purinoceptor-mediated Ca(2+) release in a Ca(2+)-dependent manner and promote an influx of Ca(2+) in response to ATP. Through this mechanism and possibly others, plays a role in the formation and function of calcium carbonate-based structures in the vestibular system of the inner ear, called otoconia, that sense gravity and linear acceleration. In obesity, may attenuate adipose tissue inflammation, through the negative regulation of IFNG signaling, hence may play an adaptive role in the maintainance of metabolic homeostasis. Following alkali activation, may also be permeable Na(+), K(+), Cs(+) and Li(+). The chain is Proton channel OTOP1 from Mus musculus (Mouse).